The primary structure comprises 281 residues: 2,3,4,5-tetrahydropyridine-2,6-dicarboxylate N-succinyltransferase (281 aa).

Residues Arg108 and Asp145 each contribute to the substrate site.

Belongs to the transferase hexapeptide repeat family. In terms of assembly, homotrimer.

It is found in the cytoplasm. The enzyme catalyses (S)-2,3,4,5-tetrahydrodipicolinate + succinyl-CoA + H2O = (S)-2-succinylamino-6-oxoheptanedioate + CoA. The protein operates within amino-acid biosynthesis; L-lysine biosynthesis via DAP pathway; LL-2,6-diaminopimelate from (S)-tetrahydrodipicolinate (succinylase route): step 1/3. The sequence is that of 2,3,4,5-tetrahydropyridine-2,6-dicarboxylate N-succinyltransferase from Parvibaculum lavamentivorans (strain DS-1 / DSM 13023 / NCIMB 13966).